Reading from the N-terminus, the 385-residue chain is MPIYILIERSVKNGRIDFWNEDAIRTLGKAILDRDYSLRVEFPENRLCPMVPNRATYIRYIHDLLSSTSGQKDKKRIIGLDIGTGASCIYPLLGCRMYSYDFVGTEIDKFSFETAKSNILQNNMESQIKIVLRSKQDCLLPDTEGMEEFTFVMCNPPFYEHEEDFINFKQNPPSGVCTGVYHEMVTEGGEVGFANKILTESKKRKGIQWYTCMFGKKSSVPAVVDKLREQNISNYGIYELALGKTKRWIICWSFQAMRPHNELIRPSSTSLSKYFPHKVLQNWTLDPELCAQIDDILQKFLDDNKIPWSKKGSVLEISTKSITWSRKARRISKSQTSVSSLEGQMKCELNVIDNQLQCKWIEGYDYNVYESFCSALARALRDNKK.

S-adenosyl-L-methionine contacts are provided by R54, G83, E106, and N155.

This sequence belongs to the methyltransferase superfamily. METTL16/RlmF family.

The protein resides in the cytoplasm. It is found in the nucleus. The catalysed reaction is adenosine in U6 snRNA + S-adenosyl-L-methionine = N(6)-methyladenosine in U6 snRNA + S-adenosyl-L-homocysteine + H(+). Functionally, RNA N6-methyltransferase that mediates N6-methylation of adenine of U6 small nuclear RNA (U6 snRNA). The polypeptide is U6 small nuclear RNA (adenine-(43)-N(6))-methyltransferase (Schizosaccharomyces pombe (strain 972 / ATCC 24843) (Fission yeast)).